The primary structure comprises 510 residues: Chromosomal replication initiator protein DnaA (510 aa).

The interval 1-107 (MTNDPGSGFA…VRIAPPPADD (107 aa)) is domain I, interacts with DnaA modulators. Residues 107-169 (DDDDSVAAAV…ADTSASADGT (63 aa)) are domain II. The disordered stretch occupies residues 119 to 168 (PGLEASPETSQEVSDEIDDFGENAPKSRQSWPTHFKKRSTDADTSASADG). Residues 170-386 (SLNRRYTFDT…GALIRVTAFA (217 aa)) form a domain III, AAA+ region region. Glycine 214, glycine 216, lysine 217, and threonine 218 together coordinate ATP. Residues 387 to 510 (SLNKTPIDKA…TTRIRQRSKR (124 aa)) form a domain IV, binds dsDNA region.

The protein belongs to the DnaA family. In terms of assembly, oligomerizes as a right-handed, spiral filament on DNA at oriC.

The protein resides in the cytoplasm. Functionally, plays an essential role in the initiation and regulation of chromosomal replication. ATP-DnaA binds to the origin of replication (oriC) to initiate formation of the DNA replication initiation complex once per cell cycle. Binds the DnaA box (a 9 base pair repeat at the origin) and separates the double-stranded (ds)DNA. Forms a right-handed helical filament on oriC DNA; dsDNA binds to the exterior of the filament while single-stranded (ss)DNA is stabiized in the filament's interior. The ATP-DnaA-oriC complex binds and stabilizes one strand of the AT-rich DNA unwinding element (DUE), permitting loading of DNA polymerase. After initiation quickly degrades to an ADP-DnaA complex that is not apt for DNA replication. Binds acidic phospholipids. The polypeptide is Chromosomal replication initiator protein DnaA (Mycobacterium ulcerans (strain Agy99)).